We begin with the raw amino-acid sequence, 238 residues long: Thrombin-like enzyme halystase (238 aa).

Residues 1–229 enclose the Peptidase S1 domain; sequence IIGGDECNIN…HLDWIKSIIA (229 aa). 6 disulfide bridges follow: C7/C141, C28/C44, C76/C236, C120/C190, C152/C169, and C180/C205. The active-site Charge relay system is H43. A glycan (N-linked (GlcNAc...) asparagine) is linked at N81. D88 serves as the catalytic Charge relay system. N100 is a glycosylation site (N-linked (GlcNAc...) asparagine). The active-site Charge relay system is S184.

This sequence belongs to the peptidase S1 family. Snake venom subfamily. In terms of assembly, monomer. Expressed by the venom gland.

The protein localises to the secreted. With respect to regulation, inhibited by diisopropylfluorophosphate (DFP), PMSF and leupeptin. Its function is as follows. Thrombin-like snake venom serine protease. Cleaves fibrinogen (beta chain of fibrinogen (FGB) and more slowly alpha chain (FGA)) without inducing fibrin clotting and cleaves kininogen to produce bradykinin (KNG), resulting in the reduction of blood pressure. The sequence is that of Thrombin-like enzyme halystase from Gloydius blomhoffii (Mamushi).